We begin with the raw amino-acid sequence, 163 residues long: Small ribosomal subunit protein uS7 (163 aa).

Belongs to the universal ribosomal protein uS7 family. In terms of assembly, part of the 30S ribosomal subunit. Contacts proteins S9 and S11.

Its function is as follows. One of the primary rRNA binding proteins, it binds directly to 16S rRNA where it nucleates assembly of the head domain of the 30S subunit. Is located at the subunit interface close to the decoding center, probably blocks exit of the E-site tRNA. The sequence is that of Small ribosomal subunit protein uS7 from Rickettsia bellii (strain RML369-C).